Consider the following 520-residue polypeptide: MAHTLGLTQPNSTEPHKISFTAKEIDVIEWKGDILVVGVTEKDLAKDGNSKFENPILSKVDAHLSGLLAQVSSEEDFTGKPGQSTVLRLPGLGSKRIALIGLGQSVSSPVAFHSLGEAVATVSKASQSTSAAIVLASSVSDESKLSSVSALASGIVLGLFEDGRYKSESKKPSLKAVDIIGFGTGAEVEKKLKYAEDVSYGVIFGRELINSPANVLTPAVLAEEAAKVASTYSDVFTANILNEEQCKELKMGSYLAVAAASANPPHFIHLVYKPPNGSVKTKLALVGKGLTFDSGGYNIKTGPGCSIELMKFDMGGSAAVLGAAKAIGEIKPPGVEVHFIVAACENMISGTGMRPGDVITASNGKTIEVNNTDAEGRLTLADALVYACNQGVDKIVDLATLTGACVIALGTSMAGIYTPSDELAKEVIAASERSGEKLWRMPLEESYWEMMKSGVADMVNTGGRAGGSITAALFLKQFVSEKVQWMHIDMAGPVWNEKKKSGTGFGVATLVEWVQKNSSS.

Residues Lys-288 and Asp-293 each contribute to the Mn(2+) site. Lys-300 is an active-site residue. The Mn(2+) site is built by Asp-313, Asp-373, and Glu-375. Arg-377 is a catalytic residue.

The protein belongs to the peptidase M17 family. In terms of assembly, homohexamer (dimer of homotrimers). The cofactor is Mn(2+).

It localises to the cytoplasm. The catalysed reaction is Release of an N-terminal amino acid, Xaa-|-Yaa-, in which Xaa is preferably Leu, but may be other amino acids including Pro although not Arg or Lys, and Yaa may be Pro. Amino acid amides and methyl esters are also readily hydrolyzed, but rates on arylamides are exceedingly low.. It carries out the reaction Release of N-terminal proline from a peptide.. In terms of biological role, presumably involved in the processing and regular turnover of intracellular proteins. Catalyzes the removal of unsubstituted N-terminal amino acids from various peptides. Possesses leucine aminopeptidase activity against the model substrate leucine-amido methyl coumarin. Possesses Cys-Gly dipeptidase activity. In addition, can cleave Cys-Leu and Leu-Cys dipeptides. Functions as a molecular chaperone to protect proteins from heat-induced damage. The protein is Leucine aminopeptidase 1 of Arabidopsis thaliana (Mouse-ear cress).